A 225-amino-acid polypeptide reads, in one-letter code: UPF0758 protein BcerKBAB4_4299 (225 aa).

The region spanning S103 to I225 is the MPN domain. Zn(2+) is bound by residues H174, H176, and D187. A JAMM motif motif is present at residues H174–D187.

The protein belongs to the UPF0758 family.

The protein is UPF0758 protein BcerKBAB4_4299 of Bacillus mycoides (strain KBAB4) (Bacillus weihenstephanensis).